The primary structure comprises 368 residues: Aminomethyltransferase (368 aa).

This sequence belongs to the GcvT family. In terms of assembly, the glycine cleavage system is composed of four proteins: P, T, L and H.

It carries out the reaction N(6)-[(R)-S(8)-aminomethyldihydrolipoyl]-L-lysyl-[protein] + (6S)-5,6,7,8-tetrahydrofolate = N(6)-[(R)-dihydrolipoyl]-L-lysyl-[protein] + (6R)-5,10-methylene-5,6,7,8-tetrahydrofolate + NH4(+). Functionally, the glycine cleavage system catalyzes the degradation of glycine. The sequence is that of Aminomethyltransferase from Xylella fastidiosa (strain M23).